The primary structure comprises 166 residues: NAD(P)H-quinone oxidoreductase subunit I, chloroplastic (166 aa).

4Fe-4S ferredoxin-type domains follow at residues G55–K84 and L95–E124. Residues C64, C67, C70, C74, C104, C107, C110, and C114 each coordinate [4Fe-4S] cluster.

The protein belongs to the complex I 23 kDa subunit family. NDH is composed of at least 16 different subunits, 5 of which are encoded in the nucleus. [4Fe-4S] cluster serves as cofactor.

It localises to the plastid. The protein resides in the chloroplast thylakoid membrane. It carries out the reaction a plastoquinone + NADH + (n+1) H(+)(in) = a plastoquinol + NAD(+) + n H(+)(out). The catalysed reaction is a plastoquinone + NADPH + (n+1) H(+)(in) = a plastoquinol + NADP(+) + n H(+)(out). Functionally, NDH shuttles electrons from NAD(P)H:plastoquinone, via FMN and iron-sulfur (Fe-S) centers, to quinones in the photosynthetic chain and possibly in a chloroplast respiratory chain. The immediate electron acceptor for the enzyme in this species is believed to be plastoquinone. Couples the redox reaction to proton translocation, and thus conserves the redox energy in a proton gradient. This is NAD(P)H-quinone oxidoreductase subunit I, chloroplastic from Sigesbeckia blakei.